The primary structure comprises 114 residues: Probable acid stress chaperone HdeA (114 aa).

A signal peptide spans Met-1–Ala-26. Cys-46 and Cys-94 are oxidised to a cystine.

Belongs to the HdeA family.

Its subcellular location is the periplasm. Functionally, required for optimal acid stress protection. Exhibits a chaperone-like activity only at low pH by suppressing non-specifically the aggregation of denaturated periplasmic proteins. The chain is Probable acid stress chaperone HdeA from Brucella ovis (strain ATCC 25840 / 63/290 / NCTC 10512).